Consider the following 240-residue polypeptide: tRNA (guanine-N(1)-)-methyltransferase (240 aa).

Residues G110 and 129–134 each bind S-adenosyl-L-methionine; that span reads LGDFVL.

Belongs to the RNA methyltransferase TrmD family. In terms of assembly, homodimer.

Its subcellular location is the cytoplasm. The enzyme catalyses guanosine(37) in tRNA + S-adenosyl-L-methionine = N(1)-methylguanosine(37) in tRNA + S-adenosyl-L-homocysteine + H(+). In terms of biological role, specifically methylates guanosine-37 in various tRNAs. The chain is tRNA (guanine-N(1)-)-methyltransferase from Clostridium botulinum (strain Loch Maree / Type A3).